The chain runs to 317 residues: Methionyl-tRNA formyltransferase (317 aa).

Residue 112–115 (SILP) coordinates (6S)-5,6,7,8-tetrahydrofolate.

This sequence belongs to the Fmt family.

It carries out the reaction L-methionyl-tRNA(fMet) + (6R)-10-formyltetrahydrofolate = N-formyl-L-methionyl-tRNA(fMet) + (6S)-5,6,7,8-tetrahydrofolate + H(+). In terms of biological role, attaches a formyl group to the free amino group of methionyl-tRNA(fMet). The formyl group appears to play a dual role in the initiator identity of N-formylmethionyl-tRNA by promoting its recognition by IF2 and preventing the misappropriation of this tRNA by the elongation apparatus. This is Methionyl-tRNA formyltransferase from Actinobacillus succinogenes (strain ATCC 55618 / DSM 22257 / CCUG 43843 / 130Z).